The primary structure comprises 178 residues: Cytochrome b6-f complex iron-sulfur subunit 3 (178 aa).

Residues 20 to 42 form a helical membrane-spanning segment; sequence FITGATVAVTAGAALYPAGKFLI. The Rieske domain maps to 65–161; sequence PASQILAEPP…VAVIDNSILI (97 aa). C107, H109, C125, and H128 together coordinate [2Fe-2S] cluster. A disulfide bond links C112 and C127.

Belongs to the Rieske iron-sulfur protein family. In terms of assembly, the 4 large subunits of the cytochrome b6-f complex are cytochrome b6, subunit IV (17 kDa polypeptide, PetD), cytochrome f and the Rieske protein, while the 4 small subunits are PetG, PetL, PetM and PetN. The complex functions as a dimer. The cofactor is [2Fe-2S] cluster.

It localises to the cellular thylakoid membrane. The catalysed reaction is 2 oxidized [plastocyanin] + a plastoquinol + 2 H(+)(in) = 2 reduced [plastocyanin] + a plastoquinone + 4 H(+)(out). Its function is as follows. Component of the cytochrome b6-f complex, which mediates electron transfer between photosystem II (PSII) and photosystem I (PSI), cyclic electron flow around PSI, and state transitions. The chain is Cytochrome b6-f complex iron-sulfur subunit 3 from Nostoc sp. (strain PCC 7120 / SAG 25.82 / UTEX 2576).